The sequence spans 152 residues: Deoxyuridine 5'-triphosphate nucleotidohydrolase (152 aa).

Residues 71 to 73 (RSG), asparagine 84, 88 to 90 (LID), and lysine 98 contribute to the substrate site.

Belongs to the dUTPase family. Requires Mg(2+) as cofactor.

The enzyme catalyses dUTP + H2O = dUMP + diphosphate + H(+). It functions in the pathway pyrimidine metabolism; dUMP biosynthesis; dUMP from dCTP (dUTP route): step 2/2. In terms of biological role, this enzyme is involved in nucleotide metabolism: it produces dUMP, the immediate precursor of thymidine nucleotides and it decreases the intracellular concentration of dUTP so that uracil cannot be incorporated into DNA. This Legionella pneumophila (strain Paris) protein is Deoxyuridine 5'-triphosphate nucleotidohydrolase.